A 426-amino-acid polypeptide reads, in one-letter code: Proline--tRNA ligase (426 aa).

It belongs to the class-II aminoacyl-tRNA synthetase family. ProS type 2 subfamily. As to quaternary structure, homodimer.

The protein resides in the cytoplasm. It carries out the reaction tRNA(Pro) + L-proline + ATP = L-prolyl-tRNA(Pro) + AMP + diphosphate. Functionally, catalyzes the attachment of proline to tRNA(Pro) in a two-step reaction: proline is first activated by ATP to form Pro-AMP and then transferred to the acceptor end of tRNA(Pro). The sequence is that of Proline--tRNA ligase from Rickettsia africae (strain ESF-5).